Reading from the N-terminus, the 494-residue chain is 4-trimethylaminobutyraldehyde dehydrogenase (494 aa).

Ser-2 is subject to N-acetylserine. Lys-30 carries the N6-acetyllysine; alternate modification. Residue Lys-30 is modified to N6-succinyllysine; alternate. The residue at position 59 (Lys-59) is an N6-succinyllysine. Residues Lys-180 and 232 to 236 (GSVPT) contribute to the NAD(+) site. Glu-254 (proton acceptor) is an active-site residue. Residue Cys-288 is the Nucleophile of the active site. N6-acetyllysine is present on Lys-298. An N6-acetyllysine; alternate modification is found at Lys-303. Lys-303 is modified (N6-succinyllysine; alternate). Residue Lys-344 is modified to N6-acetyllysine. An NAD(+)-binding site is contributed by Glu-391.

This sequence belongs to the aldehyde dehydrogenase family. Homotetramer.

It is found in the cytoplasm. The protein localises to the cytosol. It catalyses the reaction 4-(trimethylamino)butanal + NAD(+) + H2O = 4-(trimethylamino)butanoate + NADH + 2 H(+). The enzyme catalyses an aldehyde + NAD(+) + H2O = a carboxylate + NADH + 2 H(+). It carries out the reaction 4-aminobutanal + NAD(+) + H2O = 4-aminobutanoate + NADH + 2 H(+). The catalysed reaction is formaldehyde + NAD(+) + H2O = formate + NADH + 2 H(+). It catalyses the reaction acetaldehyde + NAD(+) + H2O = acetate + NADH + 2 H(+). The enzyme catalyses imidazole-4-acetaldehyde + NAD(+) + H2O = imidazole-4-acetate + NADH + 2 H(+). It carries out the reaction acrolein + NAD(+) + H2O = acrylate + NADH + 2 H(+). The catalysed reaction is (5-hydroxyindol-3-yl)acetaldehyde + NAD(+) + H2O = (5-hydroxyindol-3-yl)acetate + NADH + 2 H(+). It catalyses the reaction 3,4-dihydroxyphenylacetaldehyde + NAD(+) + H2O = 3,4-dihydroxyphenylacetate + NADH + 2 H(+). The enzyme catalyses spermine monoaldehyde + NAD(+) + H2O = N-(2-carboxyethyl)spermidine + NADH + 2 H(+). It carries out the reaction propanal + NAD(+) + H2O = propanoate + NADH + 2 H(+). The catalysed reaction is butanal + NAD(+) + H2O = butanoate + NADH + 2 H(+). It catalyses the reaction pentanal + NAD(+) + H2O = pentanoate + NADH + 2 H(+). The enzyme catalyses hexanal + NAD(+) + H2O = hexanoate + NADH + 2 H(+). It functions in the pathway amine and polyamine biosynthesis; carnitine biosynthesis. Its function is as follows. Converts gamma-trimethylaminobutyraldehyde into gamma-butyrobetaine with high efficiency (in vitro). Can catalyze the irreversible oxidation of a broad range of aldehydes to the corresponding acids in an NAD-dependent reaction, but with low efficiency. Catalyzes the oxidation of aldehydes arising from biogenic amines and polyamines. This is 4-trimethylaminobutyraldehyde dehydrogenase (ALDH9A1) from Pongo abelii (Sumatran orangutan).